The following is a 459-amino-acid chain: Cyclooctat-9-en-7-ol 5-monooxygenase (459 aa).

The disordered stretch occupies residues Met1–Gly27. Residue Cys408 participates in heme binding.

This sequence belongs to the cytochrome P450 family. It depends on heme as a cofactor.

The enzyme catalyses cyclooctat-9-en-7-ol + AH2 + O2 = cyclooctat-9-ene-5,7-diol + A + H2O. Involved in the biosynthesis of cyclooctatin, a potent inhibitor of lysophospholipase. Catalyzes the stereospecific hydroxylation of cyclooctat-9-en-7-ol to form cyclooctat-9-ene-5,7-diol. In Streptomyces melanosporofaciens, this protein is Cyclooctat-9-en-7-ol 5-monooxygenase.